Consider the following 491-residue polypeptide: Glutamate--tRNA ligase (491 aa).

The short motif at 13–23 (PSPTGFLHIGN) is the 'HIGH' region element. Zn(2+)-binding residues include cysteine 110, cysteine 112, cysteine 137, and histidine 139. The short motif at 254–258 (KLSKR) is the 'KMSKS' region element. Residue lysine 257 coordinates ATP.

It belongs to the class-I aminoacyl-tRNA synthetase family. Glutamate--tRNA ligase type 1 subfamily. In terms of assembly, monomer. Zn(2+) is required as a cofactor.

The protein localises to the cytoplasm. The catalysed reaction is tRNA(Glu) + L-glutamate + ATP = L-glutamyl-tRNA(Glu) + AMP + diphosphate. In terms of biological role, catalyzes the attachment of glutamate to tRNA(Glu) in a two-step reaction: glutamate is first activated by ATP to form Glu-AMP and then transferred to the acceptor end of tRNA(Glu). This chain is Glutamate--tRNA ligase, found in Listeria innocua serovar 6a (strain ATCC BAA-680 / CLIP 11262).